The chain runs to 284 residues: Protoheme IX farnesyltransferase (284 aa).

9 helical membrane-spanning segments follow: residues Ser-2–Val-19, Ile-23–Ser-45, Gly-69–Ala-89, Leu-92–Trp-112, Ile-121–Gly-141, Leu-148–Phe-168, Val-194–Gly-214, Leu-217–Trp-237, and Leu-263–Gly-283.

It belongs to the UbiA prenyltransferase family. Protoheme IX farnesyltransferase subfamily. Interacts with CtaA.

Its subcellular location is the cell inner membrane. It catalyses the reaction heme b + (2E,6E)-farnesyl diphosphate + H2O = Fe(II)-heme o + diphosphate. It functions in the pathway porphyrin-containing compound metabolism; heme O biosynthesis; heme O from protoheme: step 1/1. Its function is as follows. Converts heme B (protoheme IX) to heme O by substitution of the vinyl group on carbon 2 of heme B porphyrin ring with a hydroxyethyl farnesyl side group. In Cereibacter sphaeroides (Rhodobacter sphaeroides), this protein is Protoheme IX farnesyltransferase.